The primary structure comprises 792 residues: Pentatricopeptide repeat-containing protein At4g30700 (792 aa).

PPR repeat units follow at residues 51 to 81 (DISL…VQRP), 82 to 117 (DVFL…DLKP), 118 to 152 (NSST…GCDS), 153 to 183 (ELLL…MPEK), 184 to 218 (DTIL…SCTR), 220 to 254 (DTTT…GCYS), 255 to 285 (HDYV…FRKP), 286 to 320 (DIVA…GARL), 321 to 352 (RSST…NFLS), 353 to 383 (HASV…SPEK), 384 to 418 (SLPS…EFSP), 419 to 453 (NPVT…DFES), 454 to 484 (SIYV…MTKK), 485 to 519 (NEVT…GITP), 520 to 555 (TPVT…GFEP), and 556 to 586 (SVKH…MSIE). The interval 591–666 (VWETLLGACR…APGYTLIEIG (76 aa)) is type E motif. The segment at 667-697 (ETPHVFTSGDQSHPQVKEIYEKLEKLEGKMR) is type E(+) motif. The type DYW motif stretch occupies residues 698 to 792 (EAGYQPETEL…DGVCSCGDYW (95 aa)).

Belongs to the PPR family. PCMP-H subfamily.

The protein is Pentatricopeptide repeat-containing protein At4g30700 (DYW9) of Arabidopsis thaliana (Mouse-ear cress).